The following is a 950-amino-acid chain: 2-oxoglutarate dehydrogenase E1 component (950 aa).

The protein belongs to the alpha-ketoglutarate dehydrogenase family. As to quaternary structure, homodimer. Part of the 2-oxoglutarate dehydrogenase (OGDH) complex composed of E1 (2-oxoglutarate dehydrogenase), E2 (dihydrolipoamide succinyltransferase) and E3 (dihydrolipoamide dehydrogenase); the complex contains multiple copies of the three enzymatic components (E1, E2 and E3). Thiamine diphosphate serves as cofactor.

The enzyme catalyses N(6)-[(R)-lipoyl]-L-lysyl-[protein] + 2-oxoglutarate + H(+) = N(6)-[(R)-S(8)-succinyldihydrolipoyl]-L-lysyl-[protein] + CO2. In terms of biological role, E1 component of the 2-oxoglutarate dehydrogenase (OGDH) complex which catalyzes the decarboxylation of 2-oxoglutarate, the first step in the conversion of 2-oxoglutarate to succinyl-CoA and CO(2). The sequence is that of 2-oxoglutarate dehydrogenase E1 component from Geobacillus kaustophilus (strain HTA426).